The following is a 1016-amino-acid chain: DENN domain-containing protein 1A (1016 aa).

Residues 13 to 145 form the uDENN domain; sequence FEVYVEVAYP…HRLPIPDPGV (133 aa). The region spanning 162-298 is the cDENN domain; that stretch reads ELPSIPENRN…VISSLKNRLK (137 aa). The 79-residue stretch at 300–378 folds into the dDENN domain; sequence VSTTTGDGVA…DGRLDLLNSG (79 aa). The FXDXF motif signature appears at 381–385; the sequence is FSDVF. Residues 453–565 form a disordered region; sequence DITENGCVSS…GPTPAPPDRA (113 aa). S473 bears the Phosphoserine mark. The span at 479–489 shows a compositional bias: basic and acidic residues; sequence QDPRLREDRRP. Residues 500-509 show a composition bias toward basic residues; sequence PRPHVVRRPK. T519 bears the Phosphothreonine mark. S520, S522, S523, S536, S538, and S546 each carry phosphoserine. The Clathrin box signature appears at 569-578; the sequence is DLLEDVFSSL. S592 is modified (phosphoserine). The interval 681 to 737 is disordered; it reads LSPSIKEETPIPTPGSITIPRPQGRKTPELGIVPPPPTARPAKLQAAGGPLGDFSSE. Residue S750 is modified to Phosphoserine. R760 bears the Omega-N-methylarginine mark. Disordered stretches follow at residues 763–783 and 935–1016; these read PQGPTELLQPPSPAPGAAGTG and SARA…ETFE. Residues 954–970 show a composition bias toward pro residues; it reads LLPPRPPQSLQPTPQPS. 2 stretches are compositionally biased toward basic and acidic residues: residues 977 to 988 and 1007 to 1016; these read DPFEDLLRKTKQ and QLRRQWETFE.

As to quaternary structure, interacts with RAB35. Interacts with clathrin and with the adapter protein complex 2, AP-2. Interacts with ITSN1 and SH3GL2. Interacts (when phosphorylated) with YWHAE. In terms of processing, phosphorylated on serine and/or threonine in an Akt-dependent manner. Phosphorylation probably regulates the guanine nucleotide exchange factor (GEF) activity, possibly by disrupting an intramolecular interaction between the DENN domain and the C-terminus of the protein, thereby relieving the autoinhibition.

It is found in the cytoplasmic vesicle. The protein resides in the clathrin-coated vesicle membrane. The protein localises to the presynaptic cell membrane. With respect to regulation, the guanine nucleotide exchange factor (GEF) activity is autoinhibited. Autoinhibition may be the result of intramolecular interaction between the DENN domain and the C-terminus, which is disrupted upon phosphorylation. Activation is regulated by Akt activation. Functionally, guanine nucleotide exchange factor (GEF) regulating clathrin-mediated endocytosis through RAB35 activation. Promotes the exchange of GDP to GTP, converting inactive GDP-bound RAB35 into its active GTP-bound form. Regulates clathrin-mediated endocytosis of synaptic vesicles and mediates exit from early endosomes. Binds phosphatidylinositol-phosphates (PtdInsPs), with some preference for PtdIns(3)P. This chain is DENN domain-containing protein 1A (Dennd1a), found in Mus musculus (Mouse).